A 114-amino-acid chain; its full sequence is Large ribosomal subunit protein bL19 (114 aa).

The protein belongs to the bacterial ribosomal protein bL19 family.

Functionally, this protein is located at the 30S-50S ribosomal subunit interface and may play a role in the structure and function of the aminoacyl-tRNA binding site. In Acetivibrio thermocellus (strain ATCC 27405 / DSM 1237 / JCM 9322 / NBRC 103400 / NCIMB 10682 / NRRL B-4536 / VPI 7372) (Clostridium thermocellum), this protein is Large ribosomal subunit protein bL19.